The chain runs to 311 residues: tRNA-cytidine(32) 2-sulfurtransferase (311 aa).

The PP-loop motif signature appears at 47–52 (SGGKDS). [4Fe-4S] cluster is bound by residues Cys-122, Cys-125, and Cys-213.

It belongs to the TtcA family. Homodimer. Requires Mg(2+) as cofactor. The cofactor is [4Fe-4S] cluster.

The protein localises to the cytoplasm. It carries out the reaction cytidine(32) in tRNA + S-sulfanyl-L-cysteinyl-[cysteine desulfurase] + AH2 + ATP = 2-thiocytidine(32) in tRNA + L-cysteinyl-[cysteine desulfurase] + A + AMP + diphosphate + H(+). The protein operates within tRNA modification. Its function is as follows. Catalyzes the ATP-dependent 2-thiolation of cytidine in position 32 of tRNA, to form 2-thiocytidine (s(2)C32). The sulfur atoms are provided by the cysteine/cysteine desulfurase (IscS) system. The sequence is that of tRNA-cytidine(32) 2-sulfurtransferase from Escherichia coli (strain SMS-3-5 / SECEC).